We begin with the raw amino-acid sequence, 118 residues long: uncharacterized protein (118 aa).

This is an uncharacterized protein from Caenorhabditis elegans.